Here is a 615-residue protein sequence, read N- to C-terminus: MGKIIGIDLGTTNSCVAVLEGGEAQIIANSEGMRTTPSVVAFTKDGERIVGEPAKRQAVTNADKTITSIKTHMGTDYKVNIDGKSYTPQEISAIILQKLKSDAESYLGQTVTEAVITVPAYFTDAQRQATKDAGRIAGLDVKRIINEPTAAALAYGMDKLDQEKKILVFDLGGGTFDVSILEIGDGTFEVLATAGNNRLGGDDFDQIVIDYLAEEFKKAEGVDLRNDKMALQRLKEAAEKAKKELSSTMSSNINLPFITATAEGPKHLNIDLSRAKFEELTRGLVEKTMEPTKTALQDAGLSTGDIDDVLLVGGSTRIPAVQEAVKKFIGKEPHKGINPDECVAAGASIQAGVLAGDVKDLLLLDVTPLSLGIETMGNVMTKIIERNTTIPTKKSQIFSTAADNQTAVDIHVLQGERSMAYDNTTLGRFQLTDIPPAQRGIPQIEVTFDIDANGIVNVSAKDLGTGKEQKITITSNTNLSEAEIEQKIKEAEMNAEADKQKKEKIEAFNQAESTIYQTEKTLNELGDKISSGEKEDIEKAIADLKAVKDNQDATAEELKKATDEVMTKFQKVSQEMYQKAAQEQQAAQGAEQAQDNGPKDDNVVDADFKEVDEDK.

Threonine 175 carries the post-translational modification Phosphothreonine; by autocatalysis. The interval 573-615 is disordered; it reads SQEMYQKAAQEQQAAQGAEQAQDNGPKDDNVVDADFKEVDEDK. Residues 580-594 are compositionally biased toward low complexity; the sequence is AAQEQQAAQGAEQAQ. The segment covering 597–609 has biased composition (basic and acidic residues); sequence GPKDDNVVDADFK.

Belongs to the heat shock protein 70 family.

In terms of biological role, acts as a chaperone. The polypeptide is Chaperone protein DnaK (Clostridioides difficile (strain 630) (Peptoclostridium difficile)).